The following is a 78-amino-acid chain: Large ribosomal subunit protein bL28 (78 aa).

It belongs to the bacterial ribosomal protein bL28 family.

The polypeptide is Large ribosomal subunit protein bL28 (Flavobacterium johnsoniae (strain ATCC 17061 / DSM 2064 / JCM 8514 / BCRC 14874 / CCUG 350202 / NBRC 14942 / NCIMB 11054 / UW101) (Cytophaga johnsonae)).